Reading from the N-terminus, the 387-residue chain is Structural protein ORF387 (387 aa).

A coiled-coil region spans residues 315–387 (KTFQEMVKVA…EEKNNTVKLS (73 aa)). The interval 365-387 (LTEEQQQQNETEEEEKNNTVKLS) is disordered.

The protein resides in the virion. In Acidianus convivator (ATV), this protein is Structural protein ORF387.